A 326-amino-acid polypeptide reads, in one-letter code: Ornithine carbamoyltransferase (326 aa).

Carbamoyl phosphate is bound by residues 54–57 (STRT), Gln-81, Arg-105, and 132–135 (HPTQ). L-ornithine-binding positions include Asn-164, Asp-225, and 229–230 (SM). Carbamoyl phosphate is bound by residues 266-267 (CL) and Arg-311.

It belongs to the aspartate/ornithine carbamoyltransferase superfamily. OTCase family.

The protein localises to the cytoplasm. The enzyme catalyses carbamoyl phosphate + L-ornithine = L-citrulline + phosphate + H(+). The protein operates within amino-acid biosynthesis; L-arginine biosynthesis; L-arginine from L-ornithine and carbamoyl phosphate: step 1/3. Functionally, reversibly catalyzes the transfer of the carbamoyl group from carbamoyl phosphate (CP) to the N(epsilon) atom of ornithine (ORN) to produce L-citrulline. In Streptococcus mutans serotype c (strain ATCC 700610 / UA159), this protein is Ornithine carbamoyltransferase (argF).